Here is a 246-residue protein sequence, read N- to C-terminus: Probable transcriptional regulatory protein SPO1072 (246 aa).

The interval 1–22 is disordered; that stretch reads MAGHSKWANIQHRKGRQDAARS.

Belongs to the TACO1 family.

It localises to the cytoplasm. The sequence is that of Probable transcriptional regulatory protein SPO1072 from Ruegeria pomeroyi (strain ATCC 700808 / DSM 15171 / DSS-3) (Silicibacter pomeroyi).